The chain runs to 77 residues: Small ribosomal subunit protein bS16 (77 aa).

Belongs to the bacterial ribosomal protein bS16 family.

This Helicobacter hepaticus (strain ATCC 51449 / 3B1) protein is Small ribosomal subunit protein bS16.